A 543-amino-acid polypeptide reads, in one-letter code: Chaperonin GroEL (543 aa).

ATP is bound by residues 29–32 (TLGP), 86–90 (DGTTT), G413, 476–478 (NAA), and D492.

It belongs to the chaperonin (HSP60) family. As to quaternary structure, forms a cylinder of 14 subunits composed of two heptameric rings stacked back-to-back. Interacts with the co-chaperonin GroES.

The protein localises to the cytoplasm. The catalysed reaction is ATP + H2O + a folded polypeptide = ADP + phosphate + an unfolded polypeptide.. Together with its co-chaperonin GroES, plays an essential role in assisting protein folding. The GroEL-GroES system forms a nano-cage that allows encapsulation of the non-native substrate proteins and provides a physical environment optimized to promote and accelerate protein folding. This is Chaperonin GroEL from Streptococcus pyogenes serotype M5 (strain Manfredo).